The following is a 1198-amino-acid chain: MMMSSVAGQRKGPSDKSAAVSEQLIAQITAAVEAGNKNLLRKLGMGSYGILYGAQEKKAMELFDPEDVHNITSLWSSFKKTFTSSRDHGNLFFHLYGVMFFMVPHVHGGEGSVKISLCSSNDPTNPVLQEKVLYFSGGAQAVLMSPTITLPFVKRGPMFYYTMECLGTRAQIPCSVVAIWKQKIDIRSAIYSKQETMSWAIEALHRPQFFQDRQEAAQYISSVYSNATSSATDSVLPFVGAQLGDTKMNVPSEARMIRSSSLRVPMLKVQSKRFSSMEIPSTSTAHLLGTTRDETVIQEESRYEEEGDDGVLFPVKKAQGLNYSHVWDNLGIESFVDVELPENWDELSVRQQVAAAMIAFANKGVCLVPKHIINRDKHNIHLENITEHNYLVILERYGIVNAGSLARTENWYNLTLAQRVEELIYQRDDAYFMFGDNTNPYPPFDCYDGLTLKVRSELERVAKEQARQRFYKEAARAQVKNKVAQTSVEEIPSTSFATKVAMESGSVDSMKIAIQAEAANEAVRPNEVMFEFGQEMNNEGATELELQQPACVASNSFFNVGVFEFAWKKSSSVAAEVLSLALPAALFGKSKEMSMGSQMLRYYDAALIMYKVILYISGMGAISGQLALVWDECNVLNRKKEFINIASLYASKHRLVSASEQSSGEFCFTPTGIGKFVPLDPASGAYDLGSIRVFVTHPLASATELESIPCHIHLQCKVLSTNIMQPPRLRAQAQFGMKPDQTHFPRFPTNQVLLHYNWGVAASMGTTLVSIFSPSGIYESDGTLQPSLLGNIARNCKWWTGTCVFEICIEKTQFHSGSLAIGLGTLNTSMSTPHDILNMPHVICNLEMGRKFYFRCTITNWNGKNLLTTGRKSSLPRPKHMSHMRLFATVLKPLVSTSIHLDTVGVTVQLKCIEDLVLGGTVSVKPIYGHWTKGKNAVDFLFSEMDLSQRKEIEKLRKENVETFDEKGKKQPQVQVPLRDKFSYGAVQYFVMNWKDEERLLVLPCAPWSVRFPQGALVQEAITCPFIDWCSSFCYWSGSLEYTIIVHRVQTSNNIGGVLNITLDSSGYPFPLGISKGTYVVSAGGGAKWAFTYGMSDNIFSFVVHDDEFFPRRHTKARAIDPNASRIMTLQDRLGNLIINLPAKDVISSLEILVKPGPDFKLQLAQAPSANHEKHLGDMQTHTYLYTPDFSELRSFEN.

Post-translationally, specific enzymatic cleavages in vivo by the P1 encoded 3C-like protease yield mature proteins.

The protein resides in the host cell junction. Its subcellular location is the host plasmodesma. It is found in the virion. Functionally, transports viral genome to neighboring plant cells directly through plasmosdesmata, without any budding. The movement protein allows efficient cell to cell propagation, by bypassing the host cell wall barrier. Acts by forming a tubular structure at the host plasmodesmata, enlarging it enough to allow free passage of virion capsids. Capsid proteins VP35, VP26, and VP23 form a capsid enclosing the viral positive strand RNA genome. Together they form an icosahedral capsid pseudo T=3 with a diameter of approximately 30 nm (Potential). The polypeptide is RNA2 polyprotein (Tomato torrado virus (isolate Solanum lycopersicum/Spain/PRIToTV0301/-) (ToTV)).